The following is a 1687-amino-acid chain: PH domain leucine-rich repeat-containing protein phosphatase 1 (1687 aa).

M1 carries the post-translational modification N-acetylmethionine. Disordered stretches follow at residues 1–96 (MEPA…GGGA) and 230–406 (AAAP…AAPD). Residues 78–96 (APQPAAGGAAPVPAAGGGA) show a composition bias toward low complexity. S286 is modified (phosphoserine). Residues 314–326 (DTESFSLSPSAES) show a composition bias toward polar residues. Residue S372 is modified to Phosphoserine. The region spanning 492-592 (RIQLSGMYNV…WLRQVSKVAS (101 aa)) is the PH domain. LRR repeat units lie at residues 594–615 (RISSVDLSCCSLEHLPANLFYS), 617–638 (DLTHLNLKQNFLRQTPTLPAAR), 648–669 (KLKSLNLSNNHLGAFPSAVCSI), 671–692 (TLAELNVSCNALREVPAAVGDM), 694–715 (NLQTFLLDGNFLQSLPAELESM), 717–739 (QLSYLGLSFNEFTDIPEVLEKLT), 740–760 (AVDKLCMAGNCVETLRLQALR), 764–785 (HIKHVDLRLNILRKLMADEVDF), 788–809 (HVTQLDLRDNKLGDLDAMIFNN), 829–850 (FLKALYASSNELAQLDVYPVPN), 851–872 (YLSYMDVSRNCLESVPEWVCES), 874–895 (KLEVLDIGHNQICELPARLFCN), 897–918 (SLRKLLAGHNRLARLPERLERT), 919–940 (SVEVLDVQHNQITELPPNLLMK), 943–964 (SLRFLNASANKLETLPPATLSE), 969–989 (ILQELYLTNNCLTDKCVPLLT), 993–1014 (RLKILHMAYNRLQSFPASKMAK), 1017–1038 (ELEEIDISGNKLKAIPTTIMNC), 1040–1061 (RMHTVIAHSNCIEVFPEVMQLP), 1062–1083 (EVKCVDLSCNELSEITLPENLP), and 1085–1106 (KLQELDLTGNPRLALDHKSLEL). The region spanning 1131-1378 (SHGYTEASGV…DSISAVVVQL (248 aa)) is the PPM-type phosphatase domain. D1166, G1167, K1330, and D1369 together coordinate Mn(2+). Disordered stretches follow at residues 1414-1465 (DRPS…SSPA) and 1604-1687 (PGGY…DTPL). Over residues 1424–1445 (SSSSGMASEISSELSTSEMSSE) the composition is skewed to low complexity. Residues 1649-1669 (LPPPPQPPQPQPQPQPQPQPQ) show a composition bias toward pro residues. The PDZ-binding motif lies at 1685 to 1687 (TPL).

As to quaternary structure, interacts with the nucleotide free form of K-Ras (KRAS) via its LRR repeats. Interacts with AKT2, AKT3 and PRKCB. Interacts with WDR48 and USP12. Mn(2+) is required as a cofactor. In terms of tissue distribution, isoforms 1 and 2 are expressed in the retina.

It localises to the cytoplasm. It is found in the membrane. The protein localises to the nucleus. The catalysed reaction is O-phospho-L-seryl-[protein] + H2O = L-seryl-[protein] + phosphate. It carries out the reaction O-phospho-L-threonyl-[protein] + H2O = L-threonyl-[protein] + phosphate. With respect to regulation, insensitive to okadaic acid. Deubiquitination by WDR48-USP12 complex positively regulates PHLPP1 stability. Its function is as follows. Protein phosphatase involved in regulation of Akt and PKC signaling. Mediates dephosphorylation in the C-terminal domain hydrophobic motif of members of the AGC Ser/Thr protein kinase family; specifically acts on 'Ser-473' of AKT2 and AKT3, 'Ser-660' of PRKCB and 'Ser-657' of PRKCA. Isoform 2 seems to have a major role in regulating Akt signaling in hippocampal neurons. Akt regulates the balance between cell survival and apoptosis through a cascade that primarily alters the function of transcription factors that regulate pro- and antiapoptotic genes. Dephosphorylation of 'Ser-473' of Akt triggers apoptosis and suppression of tumor growth. Dephosphorylation of PRKCA and PRKCB leads to their destabilization and degradation. Dephosphorylates STK4 on 'Thr-387' leading to STK4 activation and apoptosis. Dephosphorylates RPS6KB1 and is involved in regulation of cap-dependent translation. Inhibits cancer cell proliferation and may act as a tumor suppressor. Dephosphorylates RAF1 inhibiting its kinase activity. May act as a negative regulator of K-Ras signaling in membrane rafts. Involved in the hippocampus-dependent long-term memory formation. Involved in circadian control by regulating the consolidation of circadian periodicity after resetting. Involved in development and function of regulatory T-cells. This chain is PH domain leucine-rich repeat-containing protein phosphatase 1 (Phlpp1), found in Mus musculus (Mouse).